We begin with the raw amino-acid sequence, 215 residues long: MVTAEMVKELRERTGAGMMECKKALTEANGDMEKAIEILRERGLAAAAKKAGRIAAEGVVDAYIHGDGRIGVLVEINTETDFAAKNEDFRTFVKDIAMHIAASKPEYISRDEVPAERVEKEKEILRAQALNEGKPEKIVEKMVEGRLEKFYKEICLLEQPFIKDPDKTVQQLLNEKIAIIGENINIRRFVRFERGEGIQKKEENFAEEVMKQING.

The involved in Mg(2+) ion dislocation from EF-Tu stretch occupies residues T80 to A83.

The protein belongs to the EF-Ts family.

It is found in the cytoplasm. Functionally, associates with the EF-Tu.GDP complex and induces the exchange of GDP to GTP. It remains bound to the aminoacyl-tRNA.EF-Tu.GTP complex up to the GTP hydrolysis stage on the ribosome. This chain is Elongation factor Ts, found in Acetivibrio thermocellus (strain ATCC 27405 / DSM 1237 / JCM 9322 / NBRC 103400 / NCIMB 10682 / NRRL B-4536 / VPI 7372) (Clostridium thermocellum).